A 1169-amino-acid polypeptide reads, in one-letter code: MLEGCILAVSSQSKSNAITNNSVPGAPNRVSFAKLREPLEVPGLLDVQTDSFEWLVGSDRWRQAAIDRGEENPVGGLEEVLAELSPIEDFSGSMSLSFSDPRFDEVKASVDECKDKDMTYAAPLFVTAEFINNNTGEIKSQTVFMGDFPMMTEKGTFIINGTERVVVSQLVRSPGVYFDETIDKSTEKTLHSVKVIPGRGAWLEFDVDKRDTVGVRIDRKRRQPVTVLLKALGWTNEQIVERFGFSEIMMGTLEKDTTSGTDEALLDIYRKLRPGEPPTKESAQTLLENLFFKEKRYDLARVGRYKVNKKLGLNAGKPITSSTLTEEDVVATIEYLVRLHEGQTSMTVPGGVEVPVEVDDIDHFGNRRLRTVGELIQNQIRVGLSRMERVVRERMTTQDVEAITPQTLINIRPVVAAIKEFFGTSQLSQFMDQNNPLSGLTHKRRLSALGPGGLSRERAGLEVRDVHPSHYGRMCPIETPEGPNIGLIGSLSVYARVNPFGFIETPYRKVENGVVTDQIDYLTADEEDRHVVAQANSPTDENGRFTEDRVMVRKKGGEVEFVSADQVDYMDVSPRQMVSVATAMIPFLEHDDANRALMGANMQRQAVPLVRSEAPLVGTGMELRAAIDAGDVVVADKTGVIEEVSADYITVMADDGTRQSYRLRKFARSNHGTCANQRPIVDAGQRVEAGQVIADGPCTQNGEMALGKNLLVAIMPWEGHNYEDAIILSNRLVEEDVLTSIHIEEHEIDARDTKLGAEEITRDIPNVSDEVLADLDERGIVRIGAEVRDGDILVGKVTPKGETELTPEERLLRAIFGEKAREVRDTSLKVPHGESGKVIGIRVFSREDDDELPAGVNELVRVYVAQKRKISDGDKLAGRHGNKGVIGKILPVEDMPFLPDGTPVDIILNTHGVPRRMNIGQILETHLGWVAKAGWNIDVAAGVPDWASKLPEELYSAPADSTVATPVFDGAQEGELAGLLGSTLPNRDGEVMVDADGKSTLFDGRSGEPFPYPVTVGYMYILKLHHLVDDKIHARSTGPYSMITQQPLGGKAQFGGQRFGEMECWAMQAYGAAYTLQELLTIKSDDTVGRVKVYEAIVKGENIPEPGIPESFKVLLKELQSLCLNVEVLSSDGAAIEMRDGDDEDLERAAANLGINLSRNESASVEDLA.

Belongs to the RNA polymerase beta chain family. The RNAP catalytic core consists of 2 alpha, 1 beta, 1 beta' and 1 omega subunit. When a sigma factor is associated with the core the holoenzyme is formed, which can initiate transcription. Interacts with RbpA, which partially restores Rif-inhibited transcription.

The enzyme catalyses RNA(n) + a ribonucleoside 5'-triphosphate = RNA(n+1) + diphosphate. DNA-dependent RNA polymerase catalyzes the transcription of DNA into RNA using the four ribonucleoside triphosphates as substrates. This subunit often mutates to generate rifampicin (Rif) resistance. Interaction with RbpA partially restores Rif-inhibited transcription; once the subunit is Rif-resistant however RbpA no longer stimulates transcription. The polypeptide is DNA-directed RNA polymerase subunit beta (Mycolicibacterium smegmatis (strain ATCC 700084 / mc(2)155) (Mycobacterium smegmatis)).